Reading from the N-terminus, the 377-residue chain is Benzylmalonyl-CoA dehydrogenase (377 aa).

Residues 123 to 132, 156 to 158, Arg266, Gln277, and 363 to 365 contribute to the FAD site; these read ICMTEPNAGS, WIT, and TSE.

Belongs to the acyl-CoA dehydrogenase family. Homotetramer. FAD serves as cofactor.

It catalyses the reaction (2-aminobenzyl)malonyl-CoA + O2 + H(+) = (E)-2-aminocinnamoyl-CoA + H2O2 + CO2. The enzyme catalyses benzylmalonyl-CoA + O2 + H(+) = (E)-cinnamoyl-CoA + H2O2 + CO2. Functionally, involved in degradation of indoleacetate, the most common member of the auxin class of plant hormones. Catalyzes the irreversible oxidative decarboxylation of (2-aminobenzyl)malonyl-CoA to 2-aminocinnamoyl-CoA and CO(2). In vitro, shows high catalytic efficiency with benzylmalonyl-CoA, a chemical analog of the physiological substrate, but otherwise accepts only a few medium-chain alkylmalonyl-CoA compounds as alternative substrates with low activities. The protein is Benzylmalonyl-CoA dehydrogenase of Aromatoleum aromaticum (strain DSM 19018 / LMG 30748 / EbN1) (Azoarcus sp. (strain EbN1)).